The primary structure comprises 188 residues: PRA1 family protein 3 (188 aa).

Met-1 carries the N-acetylmethionine modification. Over 1-35 (MDVNLAPLRAWDDFFPGSDRFARPDFRDISKWNNR) the chain is Cytoplasmic. Transmembrane regions (helical) follow at residues 36–56 (VVSN…MMIS) and 57–77 (VVGF…VLVF). At 78–92 (TGFVWAAHNKDILRR) the chain is on the cytoplasmic side. 2 consecutive transmembrane segments (helical) span residues 93-113 (MKKQ…YFLI) and 115-135 (MFGG…LMFI). Residues 103-117 (MVVMLASYFLISMFG) are required for homodimer formation and heterodimer formation with ARL6IP1. Residues 136-188 (HASLRLRNLKNKLENKMEGIGLKKTPMGIILDALEQQEDSINKFADYISKARE) lie on the Cytoplasmic side of the membrane. The targeting to endoplasmic reticulum membrane stretch occupies residues 136-188 (HASLRLRNLKNKLENKMEGIGLKKTPMGIILDALEQQEDSINKFADYISKARE).

The protein belongs to the PRA1 family. As to quaternary structure, homodimer. Heterodimer with ARL6IP1. Forms multimers. Interacts with ARL6. Interacts with prenylated RAB1A and RAB3A. Interacts with SLC1A1/EAAC1. Interacts with RTN2 (via first transmembrane domain). Does not interact with VAMP1, VAMP2 or VAMP3. In terms of tissue distribution, ubiquitous. Most abundant in heart and brain. In the embryonic brain cortex, expressed in neurons and astrocytes.

It localises to the endoplasmic reticulum membrane. Its subcellular location is the cell membrane. The protein localises to the cytoplasm. The protein resides in the cytoskeleton. In terms of biological role, regulates intracellular concentrations of taurine and glutamate. Negatively modulates SLC1A1/EAAC1 glutamate transport activity by decreasing its affinity for glutamate in a PKC activity-dependent manner. Plays a role in the retention of SLC1A1/EAAC1 in the endoplasmic reticulum. This is PRA1 family protein 3 (Arl6ip5) from Rattus norvegicus (Rat).